Here is a 374-residue protein sequence, read N- to C-terminus: Chaperone protein DnaJ (374 aa).

The J domain maps to 5–70 (DFYEILGVGK…QKRDAYDRYG (66 aa)). Residues 29–50 (AMKHHPDRNPDSKGAEDKFKEA) are disordered. Residues 35–50 (DRNPDSKGAEDKFKEA) are compositionally biased toward basic and acidic residues. Residues 134-212 (GYDTTIRVPS…CSGAGKIKRN (79 aa)) form a CR-type zinc finger. The Zn(2+) site is built by Cys-147, Cys-150, Cys-164, Cys-167, Cys-186, Cys-189, Cys-200, and Cys-203. 4 CXXCXGXG motif repeats span residues 147 to 154 (CETCDGSG), 164 to 171 (CTTCGGHG), 186 to 193 (CPKCHGSG), and 200 to 207 (CGTCSGAG).

This sequence belongs to the DnaJ family. Homodimer. Zn(2+) is required as a cofactor.

It is found in the cytoplasm. In terms of biological role, participates actively in the response to hyperosmotic and heat shock by preventing the aggregation of stress-denatured proteins and by disaggregating proteins, also in an autonomous, DnaK-independent fashion. Unfolded proteins bind initially to DnaJ; upon interaction with the DnaJ-bound protein, DnaK hydrolyzes its bound ATP, resulting in the formation of a stable complex. GrpE releases ADP from DnaK; ATP binding to DnaK triggers the release of the substrate protein, thus completing the reaction cycle. Several rounds of ATP-dependent interactions between DnaJ, DnaK and GrpE are required for fully efficient folding. Also involved, together with DnaK and GrpE, in the DNA replication of plasmids through activation of initiation proteins. This Janthinobacterium sp. (strain Marseille) (Minibacterium massiliensis) protein is Chaperone protein DnaJ.